The following is a 1197-amino-acid chain: Disease resistance-like protein CSA1 (1197 aa).

Residues P15–L178 form the TIR domain. Residue E89 is part of the active site. Residues R210–Y480 enclose the NB-ARC domain. LRR repeat units lie at residues L614–P636, N638–A659, T694–G716, L728–S749, D750–R774, V776–L796, K797–N819, M820–R843, L845–K862, and F863–Y889.

The enzyme catalyses NAD(+) + H2O = ADP-D-ribose + nicotinamide + H(+). In terms of biological role, TIR-NB-LRR receptor-like protein that functions in photomorphogenic development. May function downstream of phytochrome B (phyB) signaling. This chain is Disease resistance-like protein CSA1, found in Arabidopsis thaliana (Mouse-ear cress).